We begin with the raw amino-acid sequence, 480 residues long: Ribulose bisphosphate carboxylase large chain (480 aa).

The propeptide occupies 1 to 2 (MS). The residue at position 3 (Pro3) is an N-acetylproline. Lys14 is subject to N6,N6,N6-trimethyllysine. 2 residues coordinate substrate: Asn123 and Thr173. The active-site Proton acceptor is Lys175. Lys177 lines the substrate pocket. Mg(2+)-binding residues include Lys201, Asp203, and Glu204. Lys201 is subject to N6-carboxylysine. His294 serves as the catalytic Proton acceptor. Residues Arg295, His327, and Ser379 each contribute to the substrate site.

Belongs to the RuBisCO large chain family. Type I subfamily. Heterohexadecamer of 8 large chains and 8 small chains; disulfide-linked. The disulfide link is formed within the large subunit homodimers. Mg(2+) is required as a cofactor. The disulfide bond which can form in the large chain dimeric partners within the hexadecamer appears to be associated with oxidative stress and protein turnover.

It is found in the plastid. The protein resides in the chloroplast. The catalysed reaction is 2 (2R)-3-phosphoglycerate + 2 H(+) = D-ribulose 1,5-bisphosphate + CO2 + H2O. It catalyses the reaction D-ribulose 1,5-bisphosphate + O2 = 2-phosphoglycolate + (2R)-3-phosphoglycerate + 2 H(+). In terms of biological role, ruBisCO catalyzes two reactions: the carboxylation of D-ribulose 1,5-bisphosphate, the primary event in carbon dioxide fixation, as well as the oxidative fragmentation of the pentose substrate in the photorespiration process. Both reactions occur simultaneously and in competition at the same active site. The sequence is that of Ribulose bisphosphate carboxylase large chain from Basella alba (Malabar spinach).